Here is a 422-residue protein sequence, read N- to C-terminus: Aminopentol aminotransferase (422 aa).

Position 258 is an N6-(pyridoxal phosphate)lysine (lysine 258).

The protein belongs to the class-III pyridoxal-phosphate-dependent aminotransferase family. Requires pyridoxal 5'-phosphate as cofactor.

The protein resides in the cytoplasm. The catalysed reaction is (2S,3S,5R,10R,12S,14S,15R,16R)-2-amino-12,16-dimethylicosane-3,5,10,14,15-pentol + pyruvate = (3S,5R,10R,12S,14S,15R,16R)-3,5,10,14,15-pentahydroxy-12,16-dimethylicosan-2-one + L-alanine. Functionally, involved in degradation of fumonisin B1. Catalyzes the deamination of aminopentol (HFB1) to 2-keto-HFB1. Pyruvate is the preferred cosubstrate, but it can also use several other alpha-keto acids as amino group acceptors. The chain is Aminopentol aminotransferase (fumI) from Sphingopyxis macrogoltabida (Sphingomonas macrogoltabidus).